A 269-amino-acid chain; its full sequence is G-protein coupled receptor homolog C3 (269 aa).

C28 and C107 are oxidised to a cystine. A run of 5 helical transmembrane segments spans residues 30–50 (IMSVLYYVGFFSNMFIITLMS), 71–91 (IGILMCCSAWLLSLILSSPVS), 123–143 (LMQIEITILGFLIPIIIFVYC), 165–185 (IVLMIVVCSLICWIPLYIVLM), and 200–220 (HLCLYLNLAYAITFSETISLA).

Belongs to the G-protein coupled receptor 1 family.

It is found in the host cell membrane. This chain is G-protein coupled receptor homolog C3, found in Sus scrofa (Pig).